Reading from the N-terminus, the 94-residue chain is Putative regulatory protein Sfum_3631 (94 aa).

Belongs to the RemA family.

This Syntrophobacter fumaroxidans (strain DSM 10017 / MPOB) protein is Putative regulatory protein Sfum_3631.